Here is a 107-residue protein sequence, read N- to C-terminus: uncharacterized protein (107 aa).

This is an uncharacterized protein from Schizosaccharomyces pombe (strain 972 / ATCC 24843) (Fission yeast).